The sequence spans 247 residues: Protein GrpE (247 aa).

Residues 31 to 49 are compositionally biased toward basic and acidic residues; it reads QKEETKTTNKDNQKEDETV. The interval 31–79 is disordered; that stretch reads QKEETKTTNKDNQKEDETVKNQSNQSNQSNQTKQTNTKQQKHQPKENSH. Over residues 50 to 68 the composition is skewed to low complexity; it reads KNQSNQSNQSNQTKQTNTK.

This sequence belongs to the GrpE family. As to quaternary structure, homodimer.

It localises to the cytoplasm. In terms of biological role, participates actively in the response to hyperosmotic and heat shock by preventing the aggregation of stress-denatured proteins, in association with DnaK and GrpE. It is the nucleotide exchange factor for DnaK and may function as a thermosensor. Unfolded proteins bind initially to DnaJ; upon interaction with the DnaJ-bound protein, DnaK hydrolyzes its bound ATP, resulting in the formation of a stable complex. GrpE releases ADP from DnaK; ATP binding to DnaK triggers the release of the substrate protein, thus completing the reaction cycle. Several rounds of ATP-dependent interactions between DnaJ, DnaK and GrpE are required for fully efficient folding. This Onion yellows phytoplasma (strain OY-M) protein is Protein GrpE.